We begin with the raw amino-acid sequence, 161 residues long: Allophycocyanin alpha chain (161 aa).

Asparagine 71 is modified (N4-methylasparagine). A (2R,3E)-phycocyanobilin-binding site is contributed by cysteine 81.

The protein belongs to the phycobiliprotein family. As to quaternary structure, heterodimer of an alpha and a beta chain. In terms of processing, contains one covalently linked phycocyanobilin chromophore.

Its subcellular location is the cellular thylakoid membrane. Its function is as follows. Light-harvesting photosynthetic bile pigment-protein from the phycobiliprotein complex. Allophycocyanin has a maximum absorption at approximately 650 nanometers. In Synechocystis sp. (strain PCC 6714) (Aphanocapsa sp. (strain PCC 6714)), this protein is Allophycocyanin alpha chain (apcA).